The following is a 316-amino-acid chain: Cell division protein FtsQ (316 aa).

Residues Met-1 to Pro-34 form a disordered region. Topologically, residues Met-1–Arg-61 are cytoplasmic. Residues Leu-62–Trp-80 form a helical membrane-spanning segment. The Periplasmic segment spans residues Pro-81 to Ile-316. One can recognise a POTRA domain in the interval Phe-97–Arg-165. A disordered region spans residues Pro-295–Ile-316.

This sequence belongs to the FtsQ/DivIB family. FtsQ subfamily.

It localises to the cell inner membrane. In terms of biological role, essential cell division protein. This chain is Cell division protein FtsQ, found in Zymomonas mobilis subsp. mobilis (strain ATCC 31821 / ZM4 / CP4).